We begin with the raw amino-acid sequence, 512 residues long: Chlorogenic acid esterase (512 aa).

A signal peptide spans M1–A18. N47, N80, and N98 each carry an N-linked (GlcNAc...) asparagine glycan. An intrachain disulfide couples C92 to C120. S230 serves as the catalytic Acyl-ester intermediate. N271 carries N-linked (GlcNAc...) asparagine glycosylation. Residues C281 and C292 are joined by a disulfide bond. N-linked (GlcNAc...) asparagine glycans are attached at residues N295, N322, and N328. E351 functions as the Charge relay system in the catalytic mechanism. Residues N391 and N402 are each glycosylated (N-linked (GlcNAc...) asparagine). The active-site Charge relay system is the H416. N474 is a glycosylation site (N-linked (GlcNAc...) asparagine).

Belongs to the type-B carboxylesterase/lipase family.

It is found in the secreted. The enzyme catalyses chlorogenate + H2O = L-quinate + (E)-caffeate + H(+). Extracellular chlorogenic acid esterase that releases caffeic acid from chlorogenic acid (CGA) contained in natural substrates such as apple marc and coffee pulp. Shows no activity towards 5-O-p-coumaroyl quinic acid, another quinic ester derivative, and rosmarinic acid, another caffeic ester derivative. The protein is Chlorogenic acid esterase of Aspergillus niger.